Consider the following 129-residue polypeptide: L-ectoine synthase (129 aa).

It belongs to the ectoine synthase family.

It carries out the reaction (2S)-4-acetamido-2-aminobutanoate = L-ectoine + H2O. It participates in amine and polyamine biosynthesis; ectoine biosynthesis; L-ectoine from L-aspartate 4-semialdehyde: step 3/3. Catalyzes the circularization of gamma-N-acetyl-alpha,gamma-diaminobutyric acid (ADABA) to ectoine (1,4,5,6-tetrahydro-2-methyl-4-pyrimidine carboxylic acid), which is an excellent osmoprotectant. The polypeptide is L-ectoine synthase (Desulfosudis oleivorans (strain DSM 6200 / JCM 39069 / Hxd3) (Desulfococcus oleovorans)).